The following is a 132-amino-acid chain: Putative RNase AF_0947 (132 aa).

Residues arginine 91 and histidine 96 contribute to the active site. The RX(4)HXY motif motif lies at 91–98 (RNAIAHHY). An O-di-AMP-tyrosine modification is found at tyrosine 98.

The protein belongs to the HepT RNase toxin family. Homodimer, probably forms a complex with cognate antitoxin AF_0948. In terms of processing, modified by cognate antitoxin AF_0948; probably at least 2 successive AMPylation events occur on Tyr-98.

Its function is as follows. Probable toxic component of a putative type VII toxin-antitoxin (TA) system, probably an RNase. Probably neutralized by cognate antitoxin AF_0948. Neutralization may be due to AMPylation by AF_0948. The sequence is that of Putative RNase AF_0947 from Archaeoglobus fulgidus (strain ATCC 49558 / DSM 4304 / JCM 9628 / NBRC 100126 / VC-16).